The chain runs to 94 residues: ATP synthase F(0) complex subunit f, mitochondrial (94 aa).

N-acetylalanine is present on alanine 2. Serine 3 is subject to Phosphoserine. Lysine 22 is modified (N6-acetyllysine). A helical transmembrane segment spans residues 68-85; the sequence is MVLACYVLFSYSFSYKHL.

Belongs to the ATPase F chain family. As to quaternary structure, component of the ATP synthase complex composed at least of ATP5F1A/subunit alpha, ATP5F1B/subunit beta, ATP5MC1/subunit c (homooctomer), MT-ATP6/subunit a, MT-ATP8/subunit 8, ATP5ME/subunit e, ATP5MF/subunit f, ATP5MG/subunit g, ATP5MK/subunit k, ATP5MJ/subunit j, ATP5F1C/subunit gamma, ATP5F1D/subunit delta, ATP5F1E/subunit epsilon, ATP5PF/subunit F6, ATP5PB/subunit b, ATP5PD/subunit d, ATP5PO/subunit OSCP. ATP synthase complex consists of a soluble F(1) head domain (subunits alpha(3) and beta(3)) - the catalytic core - and a membrane F(0) domain - the membrane proton channel (subunits c, a, 8, e, f, g, k and j). These two domains are linked by a central stalk (subunits gamma, delta, and epsilon) rotating inside the F1 region and a stationary peripheral stalk (subunits F6, b, d, and OSCP).

It is found in the mitochondrion. The protein localises to the mitochondrion inner membrane. Subunit f, of the mitochondrial membrane ATP synthase complex (F(1)F(0) ATP synthase or Complex V) that produces ATP from ADP in the presence of a proton gradient across the membrane which is generated by electron transport complexes of the respiratory chain. ATP synthase complex consist of a soluble F(1) head domain - the catalytic core - and a membrane F(1) domain - the membrane proton channel. These two domains are linked by a central stalk rotating inside the F(1) region and a stationary peripheral stalk. During catalysis, ATP synthesis in the catalytic domain of F(1) is coupled via a rotary mechanism of the central stalk subunits to proton translocation. In vivo, can only synthesize ATP although its ATP hydrolase activity can be activated artificially in vitro. Part of the complex F(0) domain. The sequence is that of ATP synthase F(0) complex subunit f, mitochondrial from Pongo abelii (Sumatran orangutan).